Reading from the N-terminus, the 897-residue chain is DNA mismatch repair protein MutS (897 aa).

Position 654-661 (654-661 (GPNMAGKS)) interacts with ATP.

It belongs to the DNA mismatch repair MutS family.

This protein is involved in the repair of mismatches in DNA. It is possible that it carries out the mismatch recognition step. This protein has a weak ATPase activity. This Maricaulis maris (strain MCS10) (Caulobacter maris) protein is DNA mismatch repair protein MutS.